The chain runs to 257 residues: Type III pantothenate kinase (257 aa).

5–12 lines the ATP pocket; that stretch reads DIGNTNIK. Residue 107–110 participates in substrate binding; that stretch reads GSDR. The active-site Proton acceptor is the aspartate 109. Position 133 (threonine 133) interacts with ATP.

This sequence belongs to the type III pantothenate kinase family. As to quaternary structure, homodimer. The cofactor is NH4(+). K(+) serves as cofactor.

It localises to the cytoplasm. It catalyses the reaction (R)-pantothenate + ATP = (R)-4'-phosphopantothenate + ADP + H(+). It functions in the pathway cofactor biosynthesis; coenzyme A biosynthesis; CoA from (R)-pantothenate: step 1/5. Its function is as follows. Catalyzes the phosphorylation of pantothenate (Pan), the first step in CoA biosynthesis. The chain is Type III pantothenate kinase from Ehrlichia ruminantium (strain Welgevonden).